The chain runs to 729 residues: Replication restart protein PriA (729 aa).

The Helicase ATP-binding domain maps to 209–376 (QTALGRFRSF…QSGAYRLLQL (168 aa)). 222 to 229 (GITGSGKT) serves as a coordination point for ATP. Positions 319 to 322 (DEEH) match the DEAH box motif. Residues Cys-436, Cys-439, Cys-445, Cys-448, Cys-463, Cys-466, Cys-476, and Cys-479 each coordinate Zn(2+). In terms of domain architecture, Helicase C-terminal spans 471-623 (PIPFKCPDCG…YAVFAENELN (153 aa)).

This sequence belongs to the helicase family. PriA subfamily. In terms of assembly, interacts with PriB with high affinity in the absence of DNA. Component of the replication restart primosome. It depends on Zn(2+) as a cofactor.

The catalysed reaction is Couples ATP hydrolysis with the unwinding of duplex DNA by translocating in the 3'-5' direction.. The enzyme catalyses ATP + H2O = ADP + phosphate + H(+). With respect to regulation, helicase and ATPase activities on forked DNA are stimulated by PriB; E.coli PriB does not stimulate this helicase. PriA:PriB complex-catalyzed duplex DNA winding is inhibited by CGS 15943 (CHEBI:131351). CGS 15943 decreases ATP hydrolysis and decreases PriA's affinity for DNA. Initiates the restart of stalled replication forks, which reloads the replicative helicase on sites other than the origin of replication. Recognizes and binds to abandoned replication forks and remodels them to uncover a helicase loading site. Promotes assembly of the primosome at these replication forks. Functionally, DNA helicase with greatest unwinding activity on forked DNA substrates with relatively short duplex lagging strand arms. A DNA-dependent ATPase. Required for DNA transformation and DNA repair. Binds single-stranded (ss)DNA and replication fork-like DNA but not double-stranded (ds)DNA. In Neisseria gonorrhoeae (strain ATCC 700825 / FA 1090), this protein is Replication restart protein PriA.